Consider the following 278-residue polypeptide: MASIDGLPPLREVIRAHGLSAKKQLGQNFLLDLNLTAKIARLAGDLTNSDVLEVGPGPGGLTRGLLAEGARRVLAIEKDARCLPALAEVAAAWPGRLEVLNADALEVDVAARLTPPIRIVANLPYNVGTELLTRWLSSDWPPFWESLTLMFQKEVAERIVAKPGSKAYGRLALLSQWRTDPKIVLTLPPDAFTPPPSIHSAVVHFTRLEAPRHPADPKVLARVTAMAFNQRRKMLRSSLKGLVPDIETVLREAGIEPTQRAEEIPLEGFCALARRLAG.

Residues Asn-28, Leu-30, Gly-55, Glu-77, Asp-103, and Asn-122 each coordinate S-adenosyl-L-methionine.

The protein belongs to the class I-like SAM-binding methyltransferase superfamily. rRNA adenine N(6)-methyltransferase family. RsmA subfamily.

It is found in the cytoplasm. The catalysed reaction is adenosine(1518)/adenosine(1519) in 16S rRNA + 4 S-adenosyl-L-methionine = N(6)-dimethyladenosine(1518)/N(6)-dimethyladenosine(1519) in 16S rRNA + 4 S-adenosyl-L-homocysteine + 4 H(+). In terms of biological role, specifically dimethylates two adjacent adenosines (A1518 and A1519) in the loop of a conserved hairpin near the 3'-end of 16S rRNA in the 30S particle. May play a critical role in biogenesis of 30S subunits. The polypeptide is Ribosomal RNA small subunit methyltransferase A (Cereibacter sphaeroides (strain ATCC 17023 / DSM 158 / JCM 6121 / CCUG 31486 / LMG 2827 / NBRC 12203 / NCIMB 8253 / ATH 2.4.1.) (Rhodobacter sphaeroides)).